The chain runs to 113 residues: UPF0482 protein YnfB (113 aa).

The N-terminal stretch at 1 to 28 (MNILSGKLPFLLGAVFAGSVVLATSVQA) is a signal peptide.

This sequence belongs to the UPF0482 family.

The protein is UPF0482 protein YnfB of Escherichia fergusonii (strain ATCC 35469 / DSM 13698 / CCUG 18766 / IAM 14443 / JCM 21226 / LMG 7866 / NBRC 102419 / NCTC 12128 / CDC 0568-73).